We begin with the raw amino-acid sequence, 152 residues long: Ribosome maturation factor RimP (152 aa).

Belongs to the RimP family.

It is found in the cytoplasm. Functionally, required for maturation of 30S ribosomal subunits. This chain is Ribosome maturation factor RimP, found in Yersinia enterocolitica serotype O:8 / biotype 1B (strain NCTC 13174 / 8081).